Here is a 446-residue protein sequence, read N- to C-terminus: Long-chain fatty acid transport protein (446 aa).

Residues Met-1–Ser-25 form the signal peptide.

The protein belongs to the OmpP1/FadL family. As to quaternary structure, has been isolated from outer membrane preparation as a homodimer.

It localises to the cell outer membrane. In terms of biological role, involved in translocation of long-chain fatty acids across the outer membrane. It is a receptor for the bacteriophage T2. FadL may form a specific channel. This is Long-chain fatty acid transport protein (fadL) from Escherichia coli (strain K12).